The sequence spans 214 residues: Small ribosomal subunit protein uS5 (214 aa).

Positions 1–61 (MTDSSPQSNP…QERDSEWQER (61 aa)) are disordered. Residues 9–29 (NPNAVPGAADVPAAAEGQQQQ) show a composition bias toward low complexity. Basic and acidic residues predominate over residues 30 to 60 (EQRRGRGDRDGRRGDRRGGRRGQERDSEWQE). Residues 58 to 121 (WQERVVQIRR…ADGKKHLVKV (64 aa)) enclose the S5 DRBM domain.

The protein belongs to the universal ribosomal protein uS5 family. As to quaternary structure, part of the 30S ribosomal subunit. Contacts proteins S4 and S8.

Its function is as follows. With S4 and S12 plays an important role in translational accuracy. In terms of biological role, located at the back of the 30S subunit body where it stabilizes the conformation of the head with respect to the body. This Synechococcus sp. (strain CC9605) protein is Small ribosomal subunit protein uS5.